The chain runs to 438 residues: Tol-Pal system protein TolB (438 aa).

The first 21 residues, Met1–Ala21, serve as a signal peptide directing secretion.

Belongs to the TolB family. The Tol-Pal system is composed of five core proteins: the inner membrane proteins TolA, TolQ and TolR, the periplasmic protein TolB and the outer membrane protein Pal. They form a network linking the inner and outer membranes and the peptidoglycan layer.

The protein localises to the periplasm. In terms of biological role, part of the Tol-Pal system, which plays a role in outer membrane invagination during cell division and is important for maintaining outer membrane integrity. In Desulfosudis oleivorans (strain DSM 6200 / JCM 39069 / Hxd3) (Desulfococcus oleovorans), this protein is Tol-Pal system protein TolB.